Consider the following 315-residue polypeptide: Transcriptional regulator protein Pur-beta (315 aa).

The disordered stretch occupies residues 1–39; the sequence is MADGDSGSERGGGGPGSFQPAPRGGGGPGGEQETQELAS. Position 2 is an N-acetylalanine (Ala2). Phosphoserine occurs at positions 6 and 8. Arg23 bears the Omega-N-methylarginine mark. Residues 28 to 254 form a DNA-binding region; the sequence is PGGEQETQEL…GVFLRVSEVK (227 aa). The residue at position 34 (Thr34) is a Phosphothreonine. Ser104 is modified (phosphoserine). An Omega-N-methylarginine modification is found at Arg155. The segment at 200 to 220 is disordered; the sequence is DDELAGGPGGGAGGPGGGLYG. The segment covering 205–219 has biased composition (gly residues); it reads GGPGGGAGGPGGGLY. Lys270 carries the post-translational modification N6-acetyllysine. Over residues 288–298 the composition is skewed to basic and acidic residues; sequence RQRDKLYERRG. The interval 288–315 is disordered; that stretch reads RQRDKLYERRGGGSGGGDESEGEEVDED. Omega-N-methylarginine is present on Arg297. Residues Ser301 and Ser307 each carry the phosphoserine modification. Acidic residues predominate over residues 305 to 315; the sequence is DESEGEEVDED.

The protein belongs to the PUR DNA-binding protein family. As to quaternary structure, homodimer, heterodimer with PURA and heterotrimer with PURA and YBX1/Y-box protein 1. Interacts with MYOCD and SRF. In terms of tissue distribution, expressed in muscle cells and in the liver.

It is found in the nucleus. Its function is as follows. Transcriptional regulator which can act as an activator or a repressor. Represses the transcription of ACTA2 in fibroblasts and smooth muscle cells via its ability to interact with the purine-rich strand of a MCAT- containing element in the 5' flanking region of the gene. Represses the transcription of MYOCD, capable of repressing all isoforms of MYOCD but the magnitude of the repressive effects is most notable for the SMC- specific isoforms. Promotes hepatic glucose production by activating the transcription of ADCY6, leading to cAMP accumulation, increased PKA activity, CREB activation, and increased transcription of PCK1 and G6PC genes. Has capacity to bind repeated elements in single-stranded DNA such as the purine-rich single strand of the PUR element located upstream of the MYC gene. Participates in transcriptional and translational regulation of alpha-MHC expression in cardiac myocytes by binding to the purine-rich negative regulatory (PNR) element. Modulates constitutive liver galectin-3 gene transcription by binding to its promoter. May play a role in the dendritic transport of a subset of mRNAs. The polypeptide is Transcriptional regulator protein Pur-beta (Purb) (Rattus norvegicus (Rat)).